A 763-amino-acid chain; its full sequence is Phosphoglycerol transferase I (763 aa).

A run of 4 helical transmembrane segments spans residues 1–21 (MSEL…AWKA), 26–46 (WWFA…ITLY), 77–97 (ILPG…LGWV), and 108–128 (VGYS…SPAF).

The protein belongs to the OpgB family.

It is found in the cell inner membrane. The enzyme catalyses a phosphatidylglycerol + a membrane-derived-oligosaccharide D-glucose = a 1,2-diacyl-sn-glycerol + a membrane-derived-oligosaccharide 6-(glycerophospho)-D-glucose.. It participates in glycan metabolism; osmoregulated periplasmic glucan (OPG) biosynthesis. Transfers a phosphoglycerol residue from phosphatidylglycerol to the membrane-bound nascent glucan backbones. The sequence is that of Phosphoglycerol transferase I from Salmonella choleraesuis (strain SC-B67).